The sequence spans 352 residues: UDP-N-acetylglucosamine--N-acetylmuramyl-(pentapeptide) pyrophosphoryl-undecaprenol N-acetylglucosamine transferase (352 aa).

Serine 195 and glutamine 287 together coordinate UDP-N-acetyl-alpha-D-glucosamine.

This sequence belongs to the glycosyltransferase 28 family. MurG subfamily.

The protein localises to the cell membrane. It catalyses the reaction Mur2Ac(oyl-L-Ala-gamma-D-Glu-L-Lys-D-Ala-D-Ala)-di-trans,octa-cis-undecaprenyl diphosphate + UDP-N-acetyl-alpha-D-glucosamine = beta-D-GlcNAc-(1-&gt;4)-Mur2Ac(oyl-L-Ala-gamma-D-Glu-L-Lys-D-Ala-D-Ala)-di-trans,octa-cis-undecaprenyl diphosphate + UDP + H(+). Its pathway is cell wall biogenesis; peptidoglycan biosynthesis. Its function is as follows. Cell wall formation. Catalyzes the transfer of a GlcNAc subunit on undecaprenyl-pyrophosphoryl-MurNAc-pentapeptide (lipid intermediate I) to form undecaprenyl-pyrophosphoryl-MurNAc-(pentapeptide)GlcNAc (lipid intermediate II). The sequence is that of UDP-N-acetylglucosamine--N-acetylmuramyl-(pentapeptide) pyrophosphoryl-undecaprenol N-acetylglucosamine transferase from Streptococcus pneumoniae (strain CGSP14).